Reading from the N-terminus, the 290-residue chain is TP53-target gene 5 protein (290 aa).

Residues 1–13 show a composition bias toward basic residues; it reads MSPSAKKRPKNSR. Disordered regions lie at residues 1 to 29 and 114 to 178; these read MSPSAKKRPKNSRVSKMQDEKLRDETEQP and KLES…RQPL. 3 stretches are compositionally biased toward basic and acidic residues: residues 16-26, 114-130, and 138-167; these read KMQDEKLRDET, KLESTGDPKKKEYKEWK, and RNKEKTSLAAMPRKEKHIEPEVPRTSRDDS.

As to quaternary structure, interacts with p53/TP53. As to expression, highly expressed in heart, brain and small intestine. Less abundant in skeletal muscle, spleen, prostate, ovary and colon. A smaller transcript is expressed specifically in the testis.

Its subcellular location is the cytoplasm. It localises to the nucleus. Functionally, may play a significant role in p53/TP53-mediating signaling pathway. The sequence is that of TP53-target gene 5 protein (TP53TG5) from Homo sapiens (Human).